We begin with the raw amino-acid sequence, 610 residues long: UvrABC system protein C (610 aa).

The region spanning 16–94 is the GIY-YIG domain; that stretch reads SQPGVYRMYD…IKLYQPRYNV (79 aa). Positions 204–239 constitute a UVR domain; that stretch reads DQVLTQLIARMEKASQDLAFEEAARIRDQIQAVRRV.

It belongs to the UvrC family. In terms of assembly, interacts with UvrB in an incision complex.

It localises to the cytoplasm. In terms of biological role, the UvrABC repair system catalyzes the recognition and processing of DNA lesions. UvrC both incises the 5' and 3' sides of the lesion. The N-terminal half is responsible for the 3' incision and the C-terminal half is responsible for the 5' incision. The chain is UvrABC system protein C from Salmonella heidelberg (strain SL476).